We begin with the raw amino-acid sequence, 908 residues long: DNA polymerase I (908 aa).

The region spanning 1–318 (MKELYLIDAL…DDINTIDTEN (318 aa)) is the 5'-3' exonuclease domain. The region spanning 319–531 (VKYRSITTKI…MEENGIYLDK (213 aa)) is the 3'-5' exonuclease domain. The tract at residues 532-908 (EYLKEYGKEL…ETGKSWGEIH (377 aa)) is polymerase.

Belongs to the DNA polymerase type-A family.

It carries out the reaction DNA(n) + a 2'-deoxyribonucleoside 5'-triphosphate = DNA(n+1) + diphosphate. Functionally, in addition to polymerase activity, this DNA polymerase exhibits 3'-5' and 5'-3' exonuclease activity. The protein is DNA polymerase I (polA) of Borreliella burgdorferi (strain ATCC 35210 / DSM 4680 / CIP 102532 / B31) (Borrelia burgdorferi).